Here is a 1657-residue protein sequence, read N- to C-terminus: Endoribonuclease Dicer homolog 4 (1657 aa).

Over residues 1–14 the composition is skewed to low complexity; that stretch reads MGDAAAAAPAAAAA. The interval 1–26 is disordered; sequence MGDAAAAAPAAAAAGPSSTRGEPKDP. The region spanning 37–214 is the Helicase ATP-binding domain; that stretch reads LCKRAVEENI…SHSFTEKGGR (178 aa). 50–57 is an ATP binding site; that stretch reads LGTGCGKT. The DECH box motif lies at 157–160; that stretch reads DECH. The region spanning 400 to 567 is the Helicase C-terminal domain; it reads NKFSVLINVL…TSNDMFDCLE (168 aa). Residues 585–675 enclose the Dicer dsRNA-binding fold domain; the sequence is SVSLLHCYCD…LPGPGSRKNK (91 aa). One can recognise a PAZ domain in the interval 856–978; that stretch reads DVSVHASYSS…LPPELCSLKV (123 aa). 2 consecutive RNase III domains span residues 1010-1173 and 1214-1358; these read DVML…VEGG and IAGL…LDSG. Residues E1252, D1344, and E1347 each contribute to the Mg(2+) site. The 68-residue stretch at 1384 to 1451 folds into the DRBM 1 domain; it reads NPMRELRELC…AQETLSKLKN (68 aa). The disordered stretch occupies residues 1525–1556; it reads GSGKHDVNNGRNNQPKLATQSGRLPSEATEKS. A compositionally biased stretch (polar residues) spans 1533-1547; sequence NGRNNQPKLATQSGR. Residues 1569-1645 enclose the DRBM 2 domain; it reads TARSFLFELC…AQGALWCLKQ (77 aa).

Belongs to the helicase family. Dicer subfamily. May interact with ARGONAUTE1 or PINHEAD through their common PAZ domains. Requires Mg(2+) as cofactor. The cofactor is Mn(2+). In terms of tissue distribution, expressed in roots, leaf blades, leaf sheaths, shoot apices and spikelets.

The protein resides in the nucleus. Functionally, involved in the RNA silencing pathway. Cleaves double-stranded RNA to produce small interfering RNAs (siRNAs) which target the selective destruction of complementary RNAs. Required for the production of 21 nucleotide siRNAs. Regulates shoot apical meristem (SAM) initiation and maintenance, leaf polarization and lemma polarity through the trans-acting siRNAS (ta-siRNAs) pathway, which probably modulate the expression of the ARF2, ARF3, ARF4, ARF14 and ARF15 genes. Can process endogenous 21 nucleotide siRNAs derived from an imperfect inverted repeat. May not be involved in microRNAs (miRNAs) production. The chain is Endoribonuclease Dicer homolog 4 (DCL4) from Oryza sativa subsp. japonica (Rice).